A 456-amino-acid chain; its full sequence is Putative E3 ubiquitin-protein ligase XBAT31 (456 aa).

ANK repeat units follow at residues 45–74 (DRHSVLHVAAANGQIEILSLLLERFTNPDL), 78–107 (HKQTPLMLAAMYGRISCVKKLAEVGANILM), 112–141 (NRRTCLHYAAYYGHANCVQAILSAAQSSPV), 157–186 (KGATPLHLAARQRRPECVNVLLDSGSLVCA), and 194–224 (PGSTPLHLAARSGSIDCVRKLLAWGADRLQR). Residues 319–368 (CCICFEQVCTIEVKDCGHQMCAQCTLALCCHNKPNPTTSTVTPPVCPFCR) form an RING-type zinc finger.

It carries out the reaction S-ubiquitinyl-[E2 ubiquitin-conjugating enzyme]-L-cysteine + [acceptor protein]-L-lysine = [E2 ubiquitin-conjugating enzyme]-L-cysteine + N(6)-ubiquitinyl-[acceptor protein]-L-lysine.. Its pathway is protein modification; protein ubiquitination. Its function is as follows. No E3 ubiquitin-protein ligase activity observed when associated with the E2 enzyme UBC8 in vitro. In Arabidopsis thaliana (Mouse-ear cress), this protein is Putative E3 ubiquitin-protein ligase XBAT31 (XBAT31).